The primary structure comprises 194 residues: Peptidyl-tRNA hydrolase (194 aa).

Tyr17 contributes to the tRNA binding site. Catalysis depends on His22, which acts as the Proton acceptor. Residues Tyr68, Asn70, and Asn116 each coordinate tRNA.

It belongs to the PTH family. In terms of assembly, monomer.

Its subcellular location is the cytoplasm. It carries out the reaction an N-acyl-L-alpha-aminoacyl-tRNA + H2O = an N-acyl-L-amino acid + a tRNA + H(+). In terms of biological role, hydrolyzes ribosome-free peptidyl-tRNAs (with 1 or more amino acids incorporated), which drop off the ribosome during protein synthesis, or as a result of ribosome stalling. Its function is as follows. Catalyzes the release of premature peptidyl moieties from peptidyl-tRNA molecules trapped in stalled 50S ribosomal subunits, and thus maintains levels of free tRNAs and 50S ribosomes. The chain is Peptidyl-tRNA hydrolase from Pseudomonas putida (strain GB-1).